Here is a 700-residue protein sequence, read N- to C-terminus: Calpain-2 catalytic subunit (700 aa).

Residue alanine 2 is modified to N-acetylalanine. Residues 2-19 constitute a propeptide, anchors to the small subunit; that stretch reads AGIAMKLAKDREAAEGLG. The 300-residue stretch at 45 to 344 folds into the Calpain catalytic domain; it reads LFQDPSFPAL…YSRLEICNLT (300 aa). Positions 89, 91, and 96 each coordinate Ca(2+). Residue cysteine 105 is part of the active site. Ca(2+) contacts are provided by glutamate 175, glutamine 229, and lysine 230. Residues histidine 262 and asparagine 286 contribute to the active site. Glutamate 292, aspartate 299, glutamine 319, and glutamate 323 together coordinate Ca(2+). Residues 345-514 form a domain III region; that stretch reads PDTLTCDSYK…KKADYQTVDD (170 aa). Residues 515–529 form a linker region; it reads EIEANIEEIEANEED. The segment at 530 to 700 is domain IV; sequence IGDGFRRLFA…LISWLSFSVL (171 aa). Residues alanine 542, aspartate 545, glutamate 547, glutamate 552, aspartate 585, aspartate 587, serine 589, lysine 591, glutamate 596, aspartate 615, aspartate 617, serine 619, threonine 621, glutamate 626, aspartate 658, and asparagine 661 each coordinate Ca(2+). 2 consecutive EF-hand domains span residues 572 to 605 and 602 to 637; these read FSIETCKIMVDMLDEDGSGKLGLKEFYILWTKIQ and TKIQKYQKIYREIDVDRSGTMNSYEMRKALEEAGFK. Positions 667–700 constitute an EF-hand 3 domain; the sequence is VRLEILFKIFKQLDPENTGTIQLDLISWLSFSVL.

Belongs to the peptidase C2 family. Forms a heterodimer with a small (regulatory) subunit (CAPNS1). Interacts with CPEB3; this leads to cleavage of CPEB3. Requires Ca(2+) as cofactor. In terms of tissue distribution, ubiquitous.

The protein resides in the cytoplasm. It is found in the cell membrane. The catalysed reaction is Broad endopeptidase specificity.. Activated by 200-1000 micromolar concentrations of calcium and inhibited by calpastatin. In terms of biological role, calcium-regulated non-lysosomal thiol-protease which catalyze limited proteolysis of substrates involved in cytoskeletal remodeling and signal transduction. Proteolytically cleaves MYOC at 'Arg-226'. Proteolytically cleaves CPEB3 following neuronal stimulation which abolishes CPEB3 translational repressor activity, leading to translation of CPEB3 target mRNAs. In Rattus norvegicus (Rat), this protein is Calpain-2 catalytic subunit (Capn2).